We begin with the raw amino-acid sequence, 470 residues long: Glucose-1-phosphate adenylyltransferase (470 aa).

Residues Gly-164, Glu-181–Lys-182, and Ser-199 each bind alpha-D-glucose 1-phosphate.

The protein belongs to the bacterial/plant glucose-1-phosphate adenylyltransferase family. As to quaternary structure, homotetramer.

It carries out the reaction alpha-D-glucose 1-phosphate + ATP + H(+) = ADP-alpha-D-glucose + diphosphate. It participates in glycan biosynthesis; glycogen biosynthesis. Involved in the biosynthesis of ADP-glucose, a building block required for the elongation reactions to produce glycogen. Catalyzes the reaction between ATP and alpha-D-glucose 1-phosphate (G1P) to produce pyrophosphate and ADP-Glc. The protein is Glucose-1-phosphate adenylyltransferase of Pseudarthrobacter chlorophenolicus (strain ATCC 700700 / DSM 12829 / CIP 107037 / JCM 12360 / KCTC 9906 / NCIMB 13794 / A6) (Arthrobacter chlorophenolicus).